Here is a 172-residue protein sequence, read N- to C-terminus: Small ribosomal subunit protein uS5 (172 aa).

The region spanning 17–80 is the S5 DRBM domain; the sequence is LKEKMIQVNR…DAARRDMVKV (64 aa).

It belongs to the universal ribosomal protein uS5 family. As to quaternary structure, part of the 30S ribosomal subunit. Contacts proteins S4 and S8.

Its function is as follows. With S4 and S12 plays an important role in translational accuracy. Located at the back of the 30S subunit body where it stabilizes the conformation of the head with respect to the body. This chain is Small ribosomal subunit protein uS5, found in Methylibium petroleiphilum (strain ATCC BAA-1232 / LMG 22953 / PM1).